A 289-amino-acid polypeptide reads, in one-letter code: uncharacterized protein (289 aa).

This is an uncharacterized protein from Dictyostelium discoideum (Social amoeba).